Reading from the N-terminus, the 423-residue chain is Hemoglobinase (423 aa).

The signal sequence occupies residues 1–18; sequence MFYSIFFIHILRIVLVDC. A propeptide spanning residues 19-29 is cleaved from the precursor; the sequence is NEYSEENVDDR. Catalysis depends on residues histidine 145 and cysteine 186. Residues 286 to 307 are disordered; that stretch reads RKKASTEHDEPPMKPKDSIPSR. Residues 286–423 constitute a propeptide that is removed on maturation; sequence RKKASTEHDE…INGVIRKVCG (138 aa). Residues 289–305 are compositionally biased toward basic and acidic residues; it reads ASTEHDEPPMKPKDSIP.

This sequence belongs to the peptidase C13 family. As to expression, gut.

The catalysed reaction is Hydrolysis of proteins and small molecule substrates at -Asn-|-Xaa- bonds.. Functionally, this protease is used by the parasite for degradation of the host globin. The chain is Hemoglobinase (HAEM) from Schistosoma japonicum (Blood fluke).